Here is a 554-residue protein sequence, read N- to C-terminus: Hedycaryol synthase (554 aa).

(2E,6E)-farnesyl diphosphate-binding residues include R270, D307, D311, R449, and D452. Positions 307 and 311 each coordinate Mg(2+). The DDXXD motif signature appears at 307-311 (DDTYD). Mg(2+) contacts are provided by D452, S456, and E460.

Belongs to the terpene synthase family. Mg(2+) serves as cofactor. Specifically expressed in flowers.

It carries out the reaction (2E,6E)-farnesyl diphosphate + H2O = (2E,6E)-hedycaryol + diphosphate. The protein operates within secondary metabolite biosynthesis; terpenoid biosynthesis. In terms of biological role, sesquiterpene synthase that catalyzes the formation of sesquiterpenes and sesquiterpenoid alcohols. Converts farnesyl diphosphate (FPP) to hedycaryol. Hedycaryol is likely to be one of the terpenes that attract insects for pollination of Camellia brevistyla. The protein is Hedycaryol synthase of Camellia brevistyla.